Reading from the N-terminus, the 273-residue chain is Proteasome subunit beta type-10 (273 aa).

Methionine 1 carries the N-acetylmethionine modification. Residues 1 to 39 (MLKPALEPRGGFSFENCQRNASLERVLPGLKVPHARKTG) constitute a propeptide, removed in mature form. The active-site Nucleophile is threonine 40. At serine 230 the chain carries Phosphoserine.

Belongs to the peptidase T1B family. The 26S proteasome consists of a 20S proteasome core and two 19S regulatory subunits. The 20S proteasome core is composed of 28 subunits that are arranged in four stacked rings, resulting in a barrel-shaped structure. The two end rings are each formed by seven alpha subunits, and the two central rings are each formed by seven beta subunits. The catalytic chamber with the active sites is on the inside of the barrel. Component of the immunoproteasome, where it displaces the equivalent housekeeping subunit PSMB7. Component of the spermatoproteasome, a form of the proteasome specifically found in testis. In terms of assembly, (Microbial infection) Interacts with HIV-1 TAT protein. In terms of processing, autocleaved. The resulting N-terminal Thr residue of the mature subunit is responsible for the nucleophile proteolytic activity.

The protein resides in the cytoplasm. It localises to the nucleus. It carries out the reaction Cleavage of peptide bonds with very broad specificity.. The proteasome is a multicatalytic proteinase complex which is characterized by its ability to cleave peptides with Arg, Phe, Tyr, Leu, and Glu adjacent to the leaving group at neutral or slightly basic pH. The proteasome has an ATP-dependent proteolytic activity. This subunit is involved in antigen processing to generate class I binding peptides. In Homo sapiens (Human), this protein is Proteasome subunit beta type-10 (PSMB10).